Consider the following 1019-residue polypeptide: MAVKCFSLYLILAAIVIGGVTSEYIEYNTKPRIVPEKINVHLVPHSHDDVGWLKTVDQYYVGSNNSIRGACVQNVLDSVIASLLDDENRKFIYVEMAFFQRWWRQQSNAKKVKVKKLVDSGQLEFINGGMCMHDEATPHYIDMIDQTTLGHQFIKTEFGQVPRVGWQIDPFGHSAVQAYLLGAEFGFDSLFFARIDYQDRAKRLREKTLEVIWQGSKSLGSSSQIFTGVFPRHYDPPEGFTFEINDVSAPIQDDPLLFDYNVQERVNDFVAAALAQVNVTRTNHIMWLMGTDFRYQYAYSWFRQIDKFIHYVNKDGRLNVLYSTPSIYTDAKYAANESWPLKTDDFFPYADKPNAYWTGYFTSRPAFKKYVRDLSGYYLAARQLEFLRGRDSSGPTTDMLADALAIAQHHDAVSGTQRQHVAADYALRLSMGYLQAEKLVASSLSFLSAAKSSTEKKNPGTKFQQCPLLNISYCPASEARLLSGKSLVVVVYNSLGWKREEVVRVPVSSENVIVKDASGKEVVFQLLPLSEIALRIRNEYVKAYLGRSPRDTAKHVLAFTASVPPLGFSSYVISDTGRTARGLSASYVTSGSMNQNVEVGQGNLKLRYSEEGVKITRHLSTKNQVTAEQSYAYYIGSNGTDKDPQASGAYVFRPDGVLPIKSKEEAQLTIVQGPLFDEVHQELNSWISQITRVYKGKNHAEIEFTIGPIPADDGISKEIITKLTTTMKTNGTFYTDSNGRDFIKRIRDFRTDWDLQVYQPVAGNYYPLNLGIYMQDKTSELSVLVDRAVGGSSLENGQIELMLHRRMQHDDIRGVGEILNETVCLPEGCKGLTIQGKFYVQIDKPGDGAKWRRTFGQEIYSPLLIAFTEQEGDSWINSHKTTFSAFEPSYSLPKNVALLTLQELENGEVLLRLAHLFEVGEDSEYSVMAKVELKKLFHNKKIREVKETSLSGNQEKAEMEKRRLIWKVEGSAGEEVKRGEAVDAEKLVVELVPMEIRTLLIKFDDQIEMVGDKEQQHRL.

A signal peptide spans 1-22; sequence MAVKCFSLYLILAAIVIGGVTS. 2 residues coordinate Zn(2+): histidine 47 and aspartate 49. The N-linked (GlcNAc...) asparagine glycan is linked to asparagine 64. Residue aspartate 169 participates in Zn(2+) binding. N-linked (GlcNAc...) asparagine glycans are attached at residues asparagine 278 and asparagine 336. A Zn(2+)-binding site is contributed by histidine 410. A disulfide bridge connects residues cysteine 466 and cysteine 474. Asparagine 470, asparagine 638, asparagine 730, and asparagine 820 each carry an N-linked (GlcNAc...) asparagine glycan. An intrachain disulfide couples cysteine 824 to cysteine 829.

This sequence belongs to the glycosyl hydrolase 38 family. Homodimer. Zn(2+) is required as a cofactor.

The catalysed reaction is Hydrolysis of terminal, non-reducing alpha-D-mannose residues in alpha-D-mannosides.. In terms of biological role, liberates mannose from p-nitrophenyl-alpha-D-mannoside in vitro. The sequence is that of Alpha-mannosidase At3g26720 from Arabidopsis thaliana (Mouse-ear cress).